A 235-amino-acid chain; its full sequence is MRPALARRLLSGLGKLLLAALLSTIVSVALLRFIDPPMWTWRLERALFPPAKVAEVKHDWVPLEQISRELQLAVIAAEDQRFAEHNGFDMDAISSALKHNQHSERVRGASTLSQQTAKNLFMWSDRSFLRKGIEAWFTLLMELGWDKSRILEMYLNIVEFGPGIYGAEAAARHYFGKPAARLTRYEASLLAAALPNPWRYRVKPPSPYVQQRSAWIRRQMGQLGQITLNKVHQAD.

A helical membrane pass occupies residues 12–34; it reads GLGKLLLAALLSTIVSVALLRFI.

Belongs to the glycosyltransferase 51 family.

Its subcellular location is the cell inner membrane. It carries out the reaction [GlcNAc-(1-&gt;4)-Mur2Ac(oyl-L-Ala-gamma-D-Glu-L-Lys-D-Ala-D-Ala)](n)-di-trans,octa-cis-undecaprenyl diphosphate + beta-D-GlcNAc-(1-&gt;4)-Mur2Ac(oyl-L-Ala-gamma-D-Glu-L-Lys-D-Ala-D-Ala)-di-trans,octa-cis-undecaprenyl diphosphate = [GlcNAc-(1-&gt;4)-Mur2Ac(oyl-L-Ala-gamma-D-Glu-L-Lys-D-Ala-D-Ala)](n+1)-di-trans,octa-cis-undecaprenyl diphosphate + di-trans,octa-cis-undecaprenyl diphosphate + H(+). Its pathway is cell wall biogenesis; peptidoglycan biosynthesis. Peptidoglycan polymerase that catalyzes glycan chain elongation from lipid-linked precursors. The chain is Biosynthetic peptidoglycan transglycosylase from Aeromonas hydrophila subsp. hydrophila (strain ATCC 7966 / DSM 30187 / BCRC 13018 / CCUG 14551 / JCM 1027 / KCTC 2358 / NCIMB 9240 / NCTC 8049).